A 406-amino-acid polypeptide reads, in one-letter code: Arginine deiminase (406 aa).

Residue C396 is the Amidino-cysteine intermediate of the active site.

The protein belongs to the arginine deiminase family.

It is found in the cytoplasm. It catalyses the reaction L-arginine + H2O = L-citrulline + NH4(+). It functions in the pathway amino-acid degradation; L-arginine degradation via ADI pathway; carbamoyl phosphate from L-arginine: step 1/2. This Aliivibrio fischeri (strain ATCC 700601 / ES114) (Vibrio fischeri) protein is Arginine deiminase.